Here is a 390-residue protein sequence, read N- to C-terminus: MKFIDESLIRIEAGDGGNGCVSFRREKFIPKGGPDGGDGGDGGDVYLQADENLNTLIDYRFNKRFAAERGENGRSSDCTGRRGKDIILPVPVGTRAIDNDTKETLGDLTQHGQKMLVAKGGYHGLGNTRFKSSVNRAPRQKTMGTPGEKRDLLLELMLLADVGMLGLPNAGKSTFIRAVSAAKPKVADYPFTTLVPSLGVVKVDDSHSFVVADIPGLIEGAADGAGLGIRFLKHLERCRVLIHLVDIAPIDGSNPADNMAIIESELFQYSEKLSEKPRWLVFNKIDTMSDEEAEERAREIAEQLGWEEDYYFISAATGKNVSPLCRDIMDFIIANPREAETQQVAPEEVKFKWEDYHQERLAEHQFDDDEDWDDDWSEEDDEGIEFIYKP.

Residues 1-159 (MKFIDESLIR…RDLLLELMLL (159 aa)) enclose the Obg domain. The OBG-type G domain maps to 160–333 (ADVGMLGLPN…LCRDIMDFII (174 aa)). GTP is bound by residues 166-173 (GLPNAGKS), 191-195 (FTTLV), 213-216 (DIPG), 283-286 (NKID), and 314-316 (SAA). S173 and T193 together coordinate Mg(2+). Residues 363–382 (EHQFDDDEDWDDDWSEEDDE) form a disordered region. Residues 366-382 (FDDDEDWDDDWSEEDDE) show a composition bias toward acidic residues.

This sequence belongs to the TRAFAC class OBG-HflX-like GTPase superfamily. OBG GTPase family. In terms of assembly, monomer. Mg(2+) serves as cofactor.

The protein localises to the cytoplasm. Functionally, an essential GTPase which binds GTP, GDP and possibly (p)ppGpp with moderate affinity, with high nucleotide exchange rates and a fairly low GTP hydrolysis rate. Plays a role in control of the cell cycle, stress response, ribosome biogenesis and in those bacteria that undergo differentiation, in morphogenesis control. The protein is GTPase Obg of Haemophilus influenzae (strain ATCC 51907 / DSM 11121 / KW20 / Rd).